Reading from the N-terminus, the 339-residue chain is Glycerol-3-phosphate dehydrogenase [NAD(P)+] (339 aa).

Residues S14, Y15, H35, and K109 each coordinate NADPH. 3 residues coordinate sn-glycerol 3-phosphate: K109, G138, and T140. Position 142 (A142) interacts with NADPH. The sn-glycerol 3-phosphate site is built by K194, D247, S257, R258, and N259. K194 functions as the Proton acceptor in the catalytic mechanism. Residue R258 coordinates NADPH. NADPH contacts are provided by V282 and E284.

It belongs to the NAD-dependent glycerol-3-phosphate dehydrogenase family.

Its subcellular location is the cytoplasm. It catalyses the reaction sn-glycerol 3-phosphate + NAD(+) = dihydroxyacetone phosphate + NADH + H(+). The catalysed reaction is sn-glycerol 3-phosphate + NADP(+) = dihydroxyacetone phosphate + NADPH + H(+). Its pathway is membrane lipid metabolism; glycerophospholipid metabolism. Catalyzes the reduction of the glycolytic intermediate dihydroxyacetone phosphate (DHAP) to sn-glycerol 3-phosphate (G3P), the key precursor for phospholipid synthesis. This is Glycerol-3-phosphate dehydrogenase [NAD(P)+] from Shewanella amazonensis (strain ATCC BAA-1098 / SB2B).